Consider the following 323-residue polypeptide: UPF0200/UPF0201 protein AF_1395 (323 aa).

Residues 1–185 are UPF0200; that stretch reads MVLEMKVIAF…EKIRQILLKL (185 aa). 12-19 lines the ATP pocket; the sequence is GYPLSGKS. A UPF0201 region spans residues 186–323; the sequence is AKNVEIEIRT…GRPVKEIDKL (138 aa).

It in the N-terminal section; belongs to the UPF0200 family. This sequence in the C-terminal section; belongs to the UPF0201 family.

This is UPF0200/UPF0201 protein AF_1395 from Archaeoglobus fulgidus (strain ATCC 49558 / DSM 4304 / JCM 9628 / NBRC 100126 / VC-16).